We begin with the raw amino-acid sequence, 398 residues long: Argininosuccinate synthase (398 aa).

8–16 (AYSGGLDTS) is a binding site for ATP. L-citrulline is bound at residue Tyr-87. Gly-117 is an ATP binding site. Thr-119, Asn-123, and Asp-124 together coordinate L-aspartate. Position 123 (Asn-123) interacts with L-citrulline. L-citrulline-binding residues include Arg-127, Ser-175, Glu-260, and Tyr-272.

It belongs to the argininosuccinate synthase family. Type 1 subfamily. In terms of assembly, homotetramer.

Its subcellular location is the cytoplasm. It catalyses the reaction L-citrulline + L-aspartate + ATP = 2-(N(omega)-L-arginino)succinate + AMP + diphosphate + H(+). It functions in the pathway amino-acid biosynthesis; L-arginine biosynthesis; L-arginine from L-ornithine and carbamoyl phosphate: step 2/3. The polypeptide is Argininosuccinate synthase (Mycobacterium tuberculosis (strain ATCC 25618 / H37Rv)).